Reading from the N-terminus, the 902-residue chain is HTH-type transcriptional regulator MalT (902 aa).

39–46 is an ATP binding site; the sequence is SPAGYGKT. Residues 832 to 897 form the HTH luxR-type domain; the sequence is ELVRTSPLTQ…EAVQTAEQLL (66 aa). Residues 856-875 constitute a DNA-binding region (H-T-H motif); the sequence is NEQIAHELDVAGTTIKTHIR.

The protein belongs to the MalT family. As to quaternary structure, monomer in solution. Oligomerizes to an active state in the presence of the positive effectors ATP and maltotriose.

With respect to regulation, activated by ATP and maltotriose, which are both required for DNA binding. Positively regulates the transcription of the maltose regulon whose gene products are responsible for uptake and catabolism of malto-oligosaccharides. Specifically binds to the promoter region of its target genes, recognizing a short DNA motif called the MalT box. In Vibrio cholerae serotype O1 (strain ATCC 39315 / El Tor Inaba N16961), this protein is HTH-type transcriptional regulator MalT.